The chain runs to 255 residues: 4-diphosphocytidyl-2-C-methyl-D-erythritol kinase (255 aa).

Lys6 is an active-site residue. An ATP-binding site is contributed by Pro95–Ser105. Asp137 is an active-site residue.

The protein belongs to the GHMP kinase family. IspE subfamily.

It catalyses the reaction 4-CDP-2-C-methyl-D-erythritol + ATP = 4-CDP-2-C-methyl-D-erythritol 2-phosphate + ADP + H(+). It functions in the pathway isoprenoid biosynthesis; isopentenyl diphosphate biosynthesis via DXP pathway; isopentenyl diphosphate from 1-deoxy-D-xylulose 5-phosphate: step 3/6. Functionally, catalyzes the phosphorylation of the position 2 hydroxy group of 4-diphosphocytidyl-2C-methyl-D-erythritol. This is 4-diphosphocytidyl-2-C-methyl-D-erythritol kinase from Campylobacter jejuni subsp. jejuni serotype O:23/36 (strain 81-176).